Consider the following 538-residue polypeptide: Cytochrome P450 734A4 (538 aa).

Residues 5–27 (VAVAAAVLLLLHVAARVADAVWW) form a helical membrane-spanning segment. Heme is bound at residue C480.

The protein belongs to the cytochrome P450 family. It depends on heme as a cofactor. As to expression, expressed in roots, shoot apex, leaf sheaths, leaf blades, internodes and panicles.

The protein localises to the membrane. Its function is as follows. Cytochrome P450 involved in brassinosteroids (BRs) inactivation and regulation of BRs homeostasis. Is a multifunctional and multisubstrate enzyme that controls the endogenous bioactive BR content both by direct inactivation of castasterone (CS) and by decreasing the levels of BR precursors. Catalyzes the oxidation of carbon 22 hydroxylated BR intermediates to produce C26 oxidized metabolites. The polypeptide is Cytochrome P450 734A4 (CYP734A4) (Oryza sativa subsp. japonica (Rice)).